A 3021-amino-acid polypeptide reads, in one-letter code: Genome polyprotein (3021 aa).

At Ser2 the chain carries N-acetylserine; by host. Residues 2 to 23 (STLPKPQRKTKRNTIRRPQDVK) are interaction with STAT1. Residues 2 to 58 (STLPKPQRKTKRNTIRRPQDVKFPGGGVIYVGVYVLPRRGPRLGVRATRKTSERSQP) form an interaction with EIF2AK2/PKR region. The segment at 2-59 (STLPKPQRKTKRNTIRRPQDVKFPGGGVIYVGVYVLPRRGPRLGVRATRKTSERSQPR) is interaction with DDX3X. The interval 2–75 (STLPKPQRKT…PKARRSEGRS (74 aa)) is disordered. Residues 2–168 (STLPKPQRKT…EDGINFATGN (167 aa)) lie on the Cytoplasmic side of the membrane. 2 short sequence motifs (nuclear localization signal) span residues 5–13 (PKPQRKTKR) and 38–43 (PRRGPR). Residues 7–16 (PQRKTKRNTI) are compositionally biased toward basic residues. A Phosphoserine; by host modification is found at Ser53. 2 consecutive short sequence motifs (nuclear localization signal) follow at residues 58-64 (PRGRRKP) and 66-71 (PKARRS). Over residues 58–68 (PRGRRKPIPKA) the composition is skewed to basic residues. Residues Ser99 and Ser116 each carry the phosphoserine; by host modification. Positions 112-152 (PRRRSRNLGKVIDTLTCGFADLMGYIPLVGAPLGGAARALA) are important for endoplasmic reticulum and mitochondrial localization. The segment at 122–173 (VIDTLTCGFADLMGYIPLVGAPLGGAARALAHGVRALEDGINFATGNLPGCS) is interaction with APOA2. The tract at residues 164-167 (FATG) is important for lipid droplets localization. Residues 169–189 (LPGCSFSIFLLALFSCLIHPA) traverse the membrane as a helical segment. The propeptide at 178-191 (LLALFSCLIHPAAS) is ER anchor for the core protein, removed in mature form by host signal peptidase. Residues 190–358 (ASLEWRNTSG…AGAHWGIIAG (169 aa)) lie on the Lumenal side of the membrane. Residues Asn196, Asn209, and Asn234 are each glycosylated (N-linked (GlcNAc...) asparagine; by host). The important for fusion stretch occupies residues 265–296 (LVGAGTMCSALYVGDMCGPVFLVGQAFTFRPR). N-linked (GlcNAc...) asparagine; by host glycosylation occurs at Asn305. A helical membrane pass occupies residues 359–379 (LAYYSMQGNWAKVAIIMVMFS). Over 380-731 (GVDASTHVTA…WEFVILIFLL (352 aa)) the chain is Lumenal. Positions 385–412 (THVTAGQAARNAYGITSLFSVGAKQNLQ) are HVR1. Residues Asn417, Asn423, and Asn430 are each glycosylated (N-linked (GlcNAc...) (high mannose) asparagine; by host). 4 disulfide bridges follow: Cys429/Cys553, Cys452/Cys459, Cys487/Cys495, and Cys504/Cys509. Asn448 carries an N-linked (GlcNAc...) asparagine; by host glycan. Positions 475–479 (ANITG) are HVR2. N-linked (GlcNAc...) asparagine; by host glycosylation is present at Asn476. Residues 481-494 (SDDKPYCWHYAPRP) are CD81-binding 1. A glycan (N-linked (GlcNAc...) asparagine; by host) is linked at Asn533. A CD81-binding 2 region spans residues 545–552 (PPSGRWFG). A glycan (N-linked (GlcNAc...) asparagine; by host) is linked at Asn557. Cystine bridges form between Cys565-Cys570, Cys587-Cys591, Cys603-Cys626, and Cys613-Cys650. Asn629 and Asn651 each carry an N-linked (GlcNAc...) (high mannose) asparagine; by host glycan. Cys658 and Cys683 form a disulfide bridge. Residues 666-677 (SEQHPLLHSTTE) are PKR/eIF2-alpha phosphorylation homology domain (PePHD). Residues 732–752 (LADARVCVALWLILTISQAEA) traverse the membrane as a helical segment. At 753–763 (ALENLVTLNAV) the chain is on the lumenal side. Residues 764–784 (AAAGTHGIGWYLVAFCAAWYV) traverse the membrane as a helical segment. Topologically, residues 785-787 (RGK) are cytoplasmic. A helical transmembrane segment spans residues 788–809 (LVPLVTYSLTGLWSLALLVLLL). Over 810–819 (PQRAYAWSGE) the chain is Lumenal. Residues 820–840 (DSATLGAGILVLFGFFTLSPW) form a helical membrane-spanning segment. Over 841-844 (YKHW) the chain is Cytoplasmic. A helical membrane pass occupies residues 845–864 (IARLIWWNQYTICRCESALH). Residues 865–887 (VWVPPLLARGGRDGVILLTSLLY) lie on the Lumenal side of the membrane. The chain crosses the membrane as a helical span at residues 888-908 (PSLIFDITKLLIAALGPLYLI). One can recognise a Peptidase C18 domain in the interval 905–1032 (LYLIQATITA…DYREMGWRLL (128 aa)). The Cytoplasmic portion of the chain corresponds to 909-1663 (QATITATPYF…CMSADLEVTT (755 aa)). The interval 910 to 1212 (ATITATPYFV…PVETLSTQAR (303 aa)) is protease NS2-3. The S-palmitoyl cysteine; by host moiety is linked to residue Cys928. Positions 935-955 (MGGKYFQMIILSLADGSNTYL) are interaction with host SCPS1. Catalysis depends on for protease NS2 activity; shared with dimeric partner residues His958, Glu978, and Cys999. The Peptidase S29 domain occupies 1033 to 1214 (APITAYAQQT…ETLSTQARSP (182 aa)). Catalysis depends on charge relay system; for serine protease NS3 activity residues His1089 and Asp1113. Zn(2+)-binding residues include Cys1129 and Cys1131. Ser1171 (charge relay system; for serine protease NS3 activity) is an active-site residue. Cys1177 and His1181 together coordinate Zn(2+). The 153-residue stretch at 1223–1375 (PAVPQSYQVG…SNIEEVALGS (153 aa)) folds into the Helicase ATP-binding domain. 1236–1243 (APTGSGKS) is a binding site for ATP. Ser1243 serves as a coordination point for Mg(2+). Positions 1322–1325 (DDCH) match the DECH box motif. The Helicase C-terminal domain occupies 1382 to 1544 (YGKAIPIACI…DLQPAETTVR (163 aa)). Residues 1492 to 1504 (QRRGRTGRGRLGT) are RNA-binding. Residues 1664 to 1684 (STWVLLGGVLAAVAAYCLSVG) form a helical membrane-spanning segment. An NS3-binding region spans residues 1685–1696 (CVVIVGHIELGG). The Cytoplasmic portion of the chain corresponds to 1685 to 1811 (CVVIVGHIEL…SVTSPLTTNQ (127 aa)). A helical transmembrane segment spans residues 1812-1830 (TMFFNILGGWVATHLAGPQ). Residues 1831 to 1834 (ASSA) are Lumenal-facing. Residues 1835 to 1855 (FVVSGLAGAAIGGIGLGRVLL) traverse the membrane as a helical segment. Position 1856 (Asp1856) is a topological domain, cytoplasmic. Residues 1857–1877 (ILAGYGAGVSGALVAFKIMGG) form a helical membrane-spanning segment. Topologically, residues 1878–1887 (EPPTTEDMVN) are lumenal. The helical transmembrane segment at 1888–1908 (LLPAILSPGALVVGVICAAIL) threads the bilayer. The Cytoplasmic portion of the chain corresponds to 1909–1978 (RRHVGPGEGP…WINEDYPSPC (70 aa)). The S-palmitoyl cysteine; by host moiety is linked to residue Cys1978. Residues 1979 to 2008 (SGDWLRIIWDWVCSVVSDFKTWLSAKIMPA) lie within the membrane without spanning it. The Cytoplasmic segment spans residues 2009 to 3000 (LPGLPFISCQ…YHSVSRARTR (992 aa)). Residues Cys2017, Cys2035, Cys2037, and Cys2058 each contribute to the Zn(2+) site. Residues 2126-2214 (EFFTEVDGVR…ASSSASQLSA (89 aa)) are FKBP8-binding. Residues 2126-2338 (EFFTEVDGVR…PVPPPRRKRT (213 aa)) are transcriptional activation. Positions 2141-2145 (PPCRP) are interaction with non-structural protein 4A. Residues 2193–2215 (ARRLARGSPPSEASSSASQLSAP) form a disordered region. The tract at residues 2195–2448 (RLARGSPPSE…ALITPCSAEE (254 aa)) is interaction with host SKP2. Phosphoserine; by host is present on residues Ser2200, Ser2203, Ser2207, Ser2210, Ser2213, and Ser2216. Low complexity predominate over residues 2200 to 2215 (SPPSEASSSASQLSAP). The segment at 2216–2255 (SLKATCQTHRPHPDAELVDANLLWRQEMGSNITRVESETK) is ISDR. The interval 2216 to 2281 (SLKATCQTHR…AELSAAAECF (66 aa)) is interaction with EIF2AK2/PKR. Residues 2255–2312 (KVVILDSFEPLRAETDDAELSAAAECFKKPPKYPPALPIWARPDYNPPLLDRWKSPDY) form an NS4B-binding region. The tract at residues 2305-2383 (DRWKSPDYVP…DTQSSTASKV (79 aa)) is V3. Disordered regions lie at residues 2318 to 2338 (HGCA…RKRT) and 2356 to 2419 (KSFP…WSTV). Positions 2328 to 2331 (PPVP) match the SH3-binding motif. A Nuclear localization signal motif is present at residues 2333–2341 (PRRKRTIQL). A Glycyl lysine isopeptide (Lys-Gly) (interchain with G-Cter in ubiquitin) cross-link involves residue Lys2356. Positions 2359 to 2381 (PSSKPQEENSSSSGVDTQSSTAS) are enriched in low complexity. A phosphoserine; by host mark is found at Ser2459 and Ser2472. Residues 2644 to 2762 (PLGFSYDTRC…VAESDGVDED (119 aa)) enclose the RdRp catalytic domain. Mg(2+) contacts are provided by Asp2650, Asp2748, and Asp2749. The helical transmembrane segment at 3001-3021 (YLLLCLLLLTVGVGIFLLPAR) threads the bilayer.

Belongs to the hepacivirus polyprotein family. As to quaternary structure, homooligomer. Interacts with E1 (via C-terminus). Interacts with the non-structural protein 5A. Interacts (via N-terminus) with host STAT1 (via SH2 domain); this interaction results in decreased STAT1 phosphorylation and ubiquitin-mediated proteasome-dependent STAT1 degradation, leading to decreased IFN-stimulated gene transcription. Interacts with host STAT3; this interaction constitutively activates STAT3. Interacts with host LTBR receptor. Interacts with host TNFRSF1A receptor and possibly induces apoptosis. Interacts with host HNRPK. Interacts with host YWHAE. Interacts with host UBE3A/E6AP. Interacts with host DDX3X. Interacts with host APOA2. Interacts with host RXRA protein. Interacts with host SP110 isoform 3/Sp110b; this interaction sequesters the transcriptional corepressor SP110 away from the nucleus. Interacts with host CREB3 nuclear transcription protein; this interaction triggers cell transformation. Interacts with host ACY3. Interacts with host C1QR1. Interacts with host RBM24; this interaction, which enhances the interaction of the mature core protein with 5'-UTR, may inhibit viral translation and favor replication. Interacts with host EIF2AK2/PKR; this interaction induces the autophosphorylation of EIF2AK2. Part of the viral assembly initiation complex composed of NS2, E1, E2, NS3, NS4A, NS5A and the mature core protein. Forms a heterodimer with envelope glycoprotein E2. Interacts with mature core protein. Interacts with protease NS2. The heterodimer E1/E2 interacts with host CLDN1; this interaction plays a role in viral entry into host cell. Interacts with host SPSB2 (via C-terminus). Part of the viral assembly initiation complex composed of NS2, E1, E2, NS3, NS4A, NS5A and the mature core protein. Interacts with host NEURL3; this interaction prevents E1 binding to glycoprotein E2. In terms of assembly, forms a heterodimer with envelope glycoprotein E1. Interacts with host CD81 and SCARB1 receptors; these interactions play a role in viral entry into host cell. Interacts with host EIF2AK2/PKR; this interaction inhibits EIF2AK2 and probably allows the virus to evade the innate immune response. Interacts with host CD209/DC-SIGN and CLEC4M/DC-SIGNR. Interact with host SPCS1; this interaction is essential for viral particle assembly. Interacts with protease NS2. The heterodimer E1/E2 interacts with host CLDN1; this interaction plays a role in viral entry into host cell. Part of the viral assembly initiation complex composed of NS2, E1, E2, NS3, NS4A, NS5A and the mature core protein. Interacts with host SLC3A2/4F2hc; the interaction may facilitate viral entry into host cell. Interacts with human PLSCR1. As to quaternary structure, homohexamer. Homoheptamer. Interacts with protease NS2. Homodimer. Interacts with host SPCS1; this interaction is essential for viral particle assembly. Interacts with envelope glycoprotein E1. Interacts with envelope glycoprotein E2. Interacts with viroporin p7. Interacts with serine protease/helicase NS3. Part of the replication complex composed of NS2, NS3, NS4A, NS4B, NS5A and the RNA-directed RNA polymerase embedded in an ER-derived membranous web. Part of the viral assembly initiation complex composed of NS2, E1, E2, NS3, NS4A, NS5A and the mature core protein. In terms of assembly, interacts with protease NS2. Interacts with non-structural protein 4A; this interaction stabilizes the folding of NS3 serine protease. NS3-NS4A interaction is essential for NS3 activation and allows membrane anchorage of the latter. NS3/NS4A complex also prevents phosphorylation of host IRF3, thus preventing the establishment of dsRNA induced antiviral state. Interacts with host MAVS; this interaction leads to the cleavage and inhibition of host MAVS. Interacts with host TICAM1; this interaction leads to the cleavage and inhibition of host TICAM1. Interacts with host TANK-binding kinase/TBK1; this interaction results in the inhibition of the association between TBK1 and IRF3, which leads to the inhibition of IRF3 activation. Interacts with host RBM24. Part of the replication complex composed of NS2, NS3, NS4A, NS4B, NS5A and the RNA-directed RNA polymerase embedded in an ER-derived membranous web. Part of the viral assembly initiation complex composed of NS2, E1, E2, NS3, NS4A, NS5A and the mature core protein. As to quaternary structure, interacts with NS3 serine protease; this interaction stabilizes the folding of NS3 serine protease. NS3-NS4A interaction is essential for NS3 activation and allows membrane anchorage of the latter. Interacts with non-structural protein 5A (via N-terminus). Part of the replication complex composed of NS2, NS3, NS4A, NS4B, NS5A and the RNA-directed RNA polymerase embedded in an ER-derived membranous web. Part of the viral assembly initiation complex composed of NS2, E1, E2, NS3, NS4A, NS5A and the mature core protein. Homomultimer. Interacts with non-structural protein NS5A. Interacts with host PLA2G4C; this interaction likely initiates the recruitment of replication complexes to lipid droplets. Interacts with host STING; this interaction disrupts the interaction between STING and TBK1 thereby suppressing the interferon signaling. Part of the replication complex composed of NS2, NS3, NS4A, NS4B, NS5A and the RNA-directed RNA polymerase embedded in an ER-derived membranous web. In terms of assembly, monomer. Homodimer; dimerization is required for RNA-binding. Interacts with the mature core protein. Interacts (via N-terminus) with non-structural protein 4A. Interacts with non-structural protein 4B. Interacts (via region D2) with RNA-directed RNA polymerase. Part of the viral assembly initiation complex composed of NS2, E1, E2, NS3, NS4A, NS5A and the mature core protein. Part of the replication complex composed of NS2, NS3, NS4A, NS4B, NS5A and the RNA-directed RNA polymerase embedded in an ER-derived membranous web. Interacts with host GRB2. Interacts with host BIN1. Interacts with host PIK3R1. Interacts with host SRCAP. Interacts with host FKBP8. Interacts (via C-terminus) with host VAPB (via MSP domain). Interacts with host EIF2AK2/PKR; this interaction leads to disruption of EIF2AK2 dimerization by NS5A and probably allows the virus to evade the innate immune response. Interacts (via N-terminus) with host PACSIN2 (via N-terminus); this interaction attenuates protein kinase C alpha-mediated phosphorylation of PACSIN2 by disrupting the interaction between PACSIN2 and PRKCA. Interacts (via N-terminus) with host SRC kinase (via SH2 domain). Interacts with most Src-family kinases. Interacts with host IFI27 and SKP2; promotes the ubiquitin-mediated proteasomal degradation of NS5A. Interacts with host GPS2. Interacts with host TNFRSF21; this interaction allows the modulation by the virus of JNK, p38 MAPK, STAT3, and Akt signaling pathways in a DR6-dependent manner. Interacts (via N-terminus) with host CIDEB (via N-terminus); this interaction seems to regulate the association of HCV particles with APOE. Interacts with host CHKA/Choline Kinase-alpha; CHKA bridges host PI4KA and NS5A and potentiates NS5A-stimulated PI4KA activity, which then facilitates the targeting of the ternary complex to the ER for viral replication. Interacts with host SPSB2 (via C-terminus); this interaction targets NS5A for ubiquitination and degradation. Interacts with host RAB18; this interaction may promote the association of NS5A and other replicase components with lipid droplets. Interacts (via region D2) with host PPIA/CYPA; the interaction stimulates RNA-binding ability of NS5A and is dependent on the peptidyl-prolyl cis-trans isomerase activity of PPIA/CYPA. Interacts with host TRIM14; this interaction induces the degradation of NS5A. As to quaternary structure, homooligomer. Interacts with non-structural protein 5A. Interacts with host VAPB. Interacts with host PRK2/PKN2. Interacts with host HNRNPA1 and SEPT6; these interactions facilitate viral replication. Part of the replication complex composed of NS2, NS3, NS4A, NS4B, NS5A and the RNA-directed RNA polymerase. It depends on Zn(2+) as a cofactor. The cofactor is Mg(2+). Specific enzymatic cleavages in vivo yield mature proteins. The structural proteins, core, E1, E2 and p7 are produced by proteolytic processing by host signal peptidases. The core protein precursor is synthesized as a 23 kDa, which is retained in the ER membrane through the hydrophobic signal peptide. Cleavage by the signal peptidase releases the 21 kDa mature core protein. The cleavage of the core protein precursor occurs between aminoacids 176 and 188 but the exact cleavage site is not known. Some degraded forms of the core protein appear as well during the course of infection. The other proteins (p7, NS2, NS3, NS4A, NS4B, NS5A and NS5B) are cleaved by the viral proteases. Autoprocessing between NS2 and NS3 is mediated by the NS2 cysteine protease catalytic domain and regulated by the NS3 N-terminal domain. Post-translationally, phosphorylated by host PKC and PKA. In terms of processing, ubiquitinated; mediated by UBE3A and leading to core protein subsequent proteasomal degradation. Highly N-glycosylated. Post-translationally, palmitoylation is required for NS2/3 autoprocessing and E2 recruitment to membranes. In terms of processing, palmitoylated. This modification may play a role in its polymerization or in protein-protein interactions. Phosphorylated on serines in a basal form termed p56. p58 is a hyperphosphorylated form of p56. p56 and p58 coexist in the cell in roughly equivalent amounts. Hyperphosphorylation is dependent on the presence of NS4A. Host CSNK1A1/CKI-alpha or RPS6KB1 kinases may be responsible for NS5A phosphorylation. Post-translationally, tyrosine phosphorylation is essential for the interaction with host SRC. In terms of processing, ubiquitinated. Ubiquitination, most probably at Lys-2356, mediated by host IFI27 and SKP2 leads to proteasomal degradation, restricting viral infection. Ubiquitination by host TRIM22 leads to interruption of viral replication. The N-terminus is phosphorylated by host PRK2/PKN2.

The protein localises to the host endoplasmic reticulum membrane. The protein resides in the host mitochondrion membrane. It is found in the virion. Its subcellular location is the host cytoplasm. It localises to the host nucleus. The protein localises to the host lipid droplet. The protein resides in the virion membrane. It is found in the host mitochondrion. Its subcellular location is the host cell membrane. It localises to the host perinuclear region. The catalysed reaction is Hydrolysis of four peptide bonds in the viral precursor polyprotein, commonly with Asp or Glu in the P6 position, Cys or Thr in P1 and Ser or Ala in P1'.. It carries out the reaction a ribonucleoside 5'-triphosphate + H2O = a ribonucleoside 5'-diphosphate + phosphate + H(+). It catalyses the reaction ATP + H2O = ADP + phosphate + H(+). The enzyme catalyses RNA(n) + a ribonucleoside 5'-triphosphate = RNA(n+1) + diphosphate. Its activity is regulated as follows. Inhibited by the antiviral drug hexamethylene amiloride. Inhibition by amantadine appears to be genotype-dependent. Also inhibited by long-alkyl-chain iminosugar derivatives. Activity is up-regulated by PRK2/PKN2-mediated phosphorylation. Functionally, packages viral RNA to form a viral nucleocapsid, and promotes virion budding. Participates in the viral particle production as a result of its interaction with the non-structural protein 5A. Binds RNA and may function as a RNA chaperone to induce the RNA structural rearrangements taking place during virus replication. Modulates viral translation initiation by interacting with viral IRES and 40S ribosomal subunit. Affects various cell signaling pathways, host immunity and lipid metabolism. Prevents the establishment of cellular antiviral state by blocking the interferon-alpha/beta (IFN-alpha/beta) and IFN-gamma signaling pathways and by blocking the formation of phosphorylated STAT1 and promoting ubiquitin-mediated proteasome-dependent degradation of STAT1. Activates STAT3 leading to cellular transformation. Regulates the activity of cellular genes, including c-myc and c-fos. May repress the promoter of p53, and sequester CREB3 and SP110 isoform 3/Sp110b in the cytoplasm. Represses cell cycle negative regulating factor CDKN1A, thereby interrupting an important check point of normal cell cycle regulation. Targets transcription factors involved in the regulation of inflammatory responses and in the immune response: suppresses TNF-induced NF-kappa-B activation, and activates AP-1. Binds to dendritic cells (DCs) via C1QR1, resulting in down-regulation of T-lymphocytes proliferation. Alters lipid metabolism by interacting with hepatocellular proteins involved in lipid accumulation and storage. Induces up-regulation of FAS promoter activity, and thereby contributes to the increased triglyceride accumulation in hepatocytes (steatosis). Its function is as follows. Forms a heterodimer with envelope glycoprotein E2, which mediates virus attachment to the host cell, virion internalization through clathrin-dependent endocytosis and fusion with host membrane. Fusion with the host cell is most likely mediated by both E1 and E2, through conformational rearrangements of the heterodimer required for fusion rather than a classical class II fusion mechanism. E1/E2 heterodimer binds host apolipoproteins such as APOB and ApoE thereby forming a lipo-viro-particle (LVP). APOE associated to the LVP allows the initial virus attachment to cell surface receptors such as the heparan sulfate proteoglycans (HSPGs), syndecan-1 (SDC1), syndecan-1 (SDC2), the low-density lipoprotein receptor (LDLR) and scavenger receptor class B type I (SCARB1). The cholesterol transfer activity of SCARB1 allows E2 exposure and binding of E2 to SCARB1 and the tetraspanin CD81. E1/E2 heterodimer binding on CD81 activates the epithelial growth factor receptor (EGFR) signaling pathway. Diffusion of the complex E1-E2-EGFR-SCARB1-CD81 to the cell lateral membrane allows further interaction with Claudin 1 (CLDN1) and occludin (OCLN) to finally trigger HCV entry. Forms a heterodimer with envelope glycoprotein E1, which mediates virus attachment to the host cell, virion internalization through clathrin-dependent endocytosis and fusion with host membrane. Fusion with the host cell is most likely mediated by both E1 and E2, through conformational rearrangements of the heterodimer required for fusion rather than a classical class II fusion mechanism. The interaction between envelope glycoprotein E2 and host apolipoprotein E/APOE allows the proper assembly, maturation and infectivity of the viral particles. This interaction is probably promoted via the up-regulation of cellular autophagy by the virus. E1/E2 heterodimer binds host apolipoproteins such as APOB and APOE thereby forming a lipo-viro-particle (LVP). APOE associated to the LVP allows the initial virus attachment to cell surface receptors such as the heparan sulfate proteoglycans (HSPGs), syndecan-1 (SDC1), syndecan-1 (SDC2), the low-density lipoprotein receptor (LDLR) and scavenger receptor class B type I (SCARB1). The cholesterol transfer activity of SCARB1 allows E2 exposure and binding of E2 to SCARB1 and the tetraspanin CD81. E1/E2 heterodimer binding on CD81 activates the epithelial growth factor receptor (EGFR) signaling pathway. Diffusion of the complex E1-E2-EGFR-SCARB1-CD81 to the cell lateral membrane allows further interaction with Claudin 1 (CLDN1) and occludin (OCLN) to finally trigger HCV entry. Inhibits host EIF2AK2/PKR activation, preventing the establishment of an antiviral state. Viral ligand for CD209/DC-SIGN and CLEC4M/DC-SIGNR, which are respectively found on dendritic cells (DCs), and on liver sinusoidal endothelial cells and macrophage-like cells of lymph node sinuses. These interactions allow the capture of circulating HCV particles by these cells and subsequent facilitated transmission to permissive cells such as hepatocytes and lymphocyte subpopulations. The interaction between E2 and host amino acid transporter complex formed by SLC3A2 and SLC7A5/LAT1 may facilitate viral entry into host cell. In terms of biological role, ion channel protein that acts as a viroporin and plays an essential role in the assembly, envelopment and secretion of viral particles. Regulates the host cell secretory pathway, which induces the intracellular retention of viral glycoproteins and favors assembly of viral particles. Creates a pore in acidic organelles and releases Ca(2+) and H(+) in the cytoplasm of infected cells, leading to a productive viral infection. High levels of cytoplasmic Ca(2+) may trigger membrane trafficking and transport of viral ER-associated proteins to viroplasms, sites of viral genome replication. This ionic imbalance induces the assembly of the inflammasome complex, which triggers the maturation of pro-IL-1beta into IL-1beta through the action of caspase-1. Targets also host mitochondria and induces mitochondrial depolarization. In addition of its role as a viroporin, acts as a lipid raft adhesion factor. Functionally, cysteine protease required for the proteolytic auto-cleavage between the non-structural proteins NS2 and NS3. The N-terminus of NS3 is required for the function of NS2 protease (active region NS2-3). Promotes the initiation of viral particle assembly by mediating the interaction between structural and non-structural proteins. Its function is as follows. Displays three enzymatic activities: serine protease with a chymotrypsin-like fold, NTPase and RNA helicase. NS3 serine protease, in association with NS4A, is responsible for the cleavages of NS3-NS4A, NS4A-NS4B, NS4B-NS5A and NS5A-NS5B. The NS3/NS4A complex prevents phosphorylation of host IRF3, thus preventing the establishment of dsRNA induced antiviral state. The NS3/NS4A complex induces host amino acid transporter component SLC3A2, thus contributing to HCV propagation. NS3 RNA helicase binds to RNA and unwinds both dsDNA and dsRNA in the 3' to 5' direction, and likely resolves RNA complicated stable secondary structures in the template strand. Binds a single ATP and catalyzes the unzipping of a single base pair of dsRNA. Inhibits host antiviral proteins TBK1 and IRF3 thereby preventing the establishment of an antiviral state. Cleaves host MAVS/CARDIF thereby preventing the establishment of an antiviral state. Cleaves host TICAM1/TRIF, thereby disrupting TLR3 signaling and preventing the establishment of an antiviral state. Peptide cofactor which forms a non-covalent complex with the N-terminal of NS3 serine protease. The NS3/NS4A complex prevents phosphorylation of host IRF3, thus preventing the establishment of dsRNA induced antiviral state. The NS3/NS4A complex induces host amino acid transporter component SLC3A2, thus contributing to HCV propagation. In terms of biological role, induces a specific membrane alteration that serves as a scaffold for the virus replication complex. This membrane alteration gives rise to the so-called ER-derived membranous web that contains the replication complex. NS4B self-interaction contributes to its function in membranous web formation. Promotes host TRIF protein degradation in a CASP8-dependent manner thereby inhibiting host TLR3-mediated interferon signaling. Disrupts the interaction between STING and TBK1 contributing to the inhibition of interferon signaling. Functionally, phosphorylated protein that is indispensable for viral replication and assembly. Both hypo- and hyperphosphorylated states are required for the viral life cycle. The hyperphosphorylated form of NS5A is an inhibitor of viral replication. Involved in RNA-binding and especially in binding to the viral genome. Zinc is essential for RNA-binding. Participates in the viral particle production as a result of its interaction with the mature viral core protein. Its interaction with host VAPB may target the viral replication complex to vesicles. Down-regulates viral IRES translation initiation. Mediates interferon resistance, presumably by interacting with and inhibiting host EIF2AK2/PKR. Prevents BIN1-induced apoptosis. Acts as a transcriptional activator of some host genes important for viral replication when localized in the nucleus. Via the interaction with host PACSIN2, modulates lipid droplet formation in order to promote virion assembly. Modulates TNFRSF21/DR6 signaling pathway for viral propagation. Its function is as follows. RNA-dependent RNA polymerase that performs primer-template recognition and RNA synthesis during viral replication. Initiates RNA transcription/replication at a flavin adenine dinucleotide (FAD), resulting in a 5'- FAD cap on viral RNAs. In this way, recognition of viral 5' RNA by host pattern recognition receptors can be bypassed, thereby evading activation of antiviral pathways. This chain is Genome polyprotein, found in Homo sapiens (Human).